Here is a 328-residue protein sequence, read N- to C-terminus: Cytochrome c biogenesis protein CcsA (328 aa).

8 helical membrane passes run 13–33, 46–66, 73–93, 101–121, 146–166, 234–254, 263–283, and 295–315; these read ISFS…LVNL, GIVI…IYSG, LYES…ISYF, LNAI…SGLL, MILG…LLVI, IISL…VWAN, WDPK…FLHI, and AIVA…VNLL.

It belongs to the CcmF/CycK/Ccl1/NrfE/CcsA family. In terms of assembly, may interact with Ccs1.

It is found in the plastid. The protein resides in the chloroplast thylakoid membrane. Functionally, required during biogenesis of c-type cytochromes (cytochrome c6 and cytochrome f) at the step of heme attachment. The protein is Cytochrome c biogenesis protein CcsA of Arabis hirsuta (Hairy rock-cress).